A 446-amino-acid chain; its full sequence is Probable E3 ubiquitin-protein ligase XBOS31 (446 aa).

5 ANK repeats span residues 46–75 (DRFTALHIAAANGRLQVLSMLLDRDGDVDV), 79–108 (KKQTPLMVAAMRGNTECVVRLLRGGANVLT), 113–142 (RARTCLHHAAYYGHAECLQAILGAAAQAQG), 160–189 (RGATPLHLAARHARASCVRLLLDKGAIVSA), and 197–227 (PGSTALHLAARAGSMECIRELLAWGADRLQR). The segment at 317–366 (CNICFEQACSMEVKECGHQMCAACTLAICCHSKPNPKTLLLHPPACPFCR) adopts an RING-type zinc-finger fold. Positions 376–401 (TTNSNKTNSRRRSRSRSSSFKGGLSS) are disordered.

The catalysed reaction is S-ubiquitinyl-[E2 ubiquitin-conjugating enzyme]-L-cysteine + [acceptor protein]-L-lysine = [E2 ubiquitin-conjugating enzyme]-L-cysteine + N(6)-ubiquitinyl-[acceptor protein]-L-lysine.. It participates in protein modification; protein ubiquitination. This Oryza sativa subsp. japonica (Rice) protein is Probable E3 ubiquitin-protein ligase XBOS31 (XBOS31).